Here is a 63-residue protein sequence, read N- to C-terminus: Sperm protamine P1 (63 aa).

The interval 1–47 is disordered; it reads MARCRRHIRSRSRSRNQCQRRRRRSHYNRRRTYRRSRRHSRRRRVRR.

This sequence belongs to the protamine P1 family. As to expression, testis.

The protein resides in the nucleus. The protein localises to the chromosome. Functionally, protamines substitute for histones in the chromatin of sperm during the haploid phase of spermatogenesis. They compact sperm DNA into a highly condensed, stable and inactive complex. The chain is Sperm protamine P1 (PRM1) from Planigale tenuirostris (Narrow-nosed planigale).